The sequence spans 478 residues: Proline--tRNA ligase (478 aa).

This sequence belongs to the class-II aminoacyl-tRNA synthetase family. ProS type 3 subfamily. In terms of assembly, homodimer.

The protein localises to the cytoplasm. The enzyme catalyses tRNA(Pro) + L-proline + ATP = L-prolyl-tRNA(Pro) + AMP + diphosphate. Its function is as follows. Catalyzes the attachment of proline to tRNA(Pro) in a two-step reaction: proline is first activated by ATP to form Pro-AMP and then transferred to the acceptor end of tRNA(Pro). The polypeptide is Proline--tRNA ligase (Clostridium botulinum (strain Loch Maree / Type A3)).